A 433-amino-acid chain; its full sequence is Eukaryotic peptide chain release factor subunit 1 (433 aa).

Residue Q182 is modified to N5-methylglutamine. S425 carries the phosphoserine modification.

Belongs to the eukaryotic release factor 1 family. Component of the eRF1-eRF3-GTP ternary complex, composed of sup45/eRF1, sup35/eRF3 and GTP.

The protein resides in the cytoplasm. Functionally, component of the eRF1-eRF3-GTP ternary complex, a ternary complex that mediates translation termination in response to the termination codons. The eRF1-eRF3-GTP complex binds to a stop codon in the ribosomal A-site. Sup45/eRF1 is responsible for stop codon recognition and inducing hydrolysis of peptidyl-tRNA. Following GTP hydrolysis by sup35/eRF3, sup35/eRF3 dissociates, permitting sup45/eRF1 to accommodate fully in the A-site. The chain is Eukaryotic peptide chain release factor subunit 1 (sup45) from Schizosaccharomyces pombe (strain 972 / ATCC 24843) (Fission yeast).